Reading from the N-terminus, the 465-residue chain is Ribulose bisphosphate carboxylase large chain (465 aa).

Lys-4 is modified (N6,N6,N6-trimethyllysine). Positions 113 and 163 each coordinate substrate. Lys-165 acts as the Proton acceptor in catalysis. A substrate-binding site is contributed by Lys-167. Positions 191, 193, and 194 each coordinate Mg(2+). Lys-191 is modified (N6-carboxylysine). His-284 serves as the catalytic Proton acceptor. 3 residues coordinate substrate: Arg-285, His-317, and Ser-369.

The protein belongs to the RuBisCO large chain family. Type I subfamily. Heterohexadecamer of 8 large chains and 8 small chains; disulfide-linked. The disulfide link is formed within the large subunit homodimers. Requires Mg(2+) as cofactor. In terms of processing, the disulfide bond which can form in the large chain dimeric partners within the hexadecamer appears to be associated with oxidative stress and protein turnover.

It localises to the plastid. Its subcellular location is the chloroplast. The enzyme catalyses 2 (2R)-3-phosphoglycerate + 2 H(+) = D-ribulose 1,5-bisphosphate + CO2 + H2O. The catalysed reaction is D-ribulose 1,5-bisphosphate + O2 = 2-phosphoglycolate + (2R)-3-phosphoglycerate + 2 H(+). Its function is as follows. RuBisCO catalyzes two reactions: the carboxylation of D-ribulose 1,5-bisphosphate, the primary event in carbon dioxide fixation, as well as the oxidative fragmentation of the pentose substrate in the photorespiration process. Both reactions occur simultaneously and in competition at the same active site. The sequence is that of Ribulose bisphosphate carboxylase large chain from Combretum indicum (Rangoon creeper).